A 232-amino-acid polypeptide reads, in one-letter code: Thiamine import ATP-binding protein ThiQ (232 aa).

One can recognise an ABC transporter domain in the interval 2 to 230 (LKLTDITWLY…KGSASAIWGI (229 aa)). 32–39 (GPSGAGKS) contributes to the ATP binding site.

The protein belongs to the ABC transporter superfamily. Thiamine importer (TC 3.A.1.19.1) family. In terms of assembly, the complex is composed of two ATP-binding proteins (ThiQ), two transmembrane proteins (ThiP) and a solute-binding protein (ThiB).

The protein resides in the cell inner membrane. It carries out the reaction thiamine(out) + ATP + H2O = thiamine(in) + ADP + phosphate + H(+). Part of the ABC transporter complex ThiBPQ involved in thiamine import. Responsible for energy coupling to the transport system. In Shigella flexneri, this protein is Thiamine import ATP-binding protein ThiQ.